A 183-amino-acid polypeptide reads, in one-letter code: Archaemetzincin (183 aa).

Residue His-131 coordinates Zn(2+). Catalysis depends on Glu-132, which acts as the Proton acceptor. Zn(2+)-binding residues include His-135, His-141, Cys-142, Cys-147, Cys-166, and Cys-169.

It belongs to the peptidase M54 family. In terms of assembly, monomer. It depends on Zn(2+) as a cofactor.

Probable zinc metalloprotease whose natural substrate is unknown. The protein is Archaemetzincin of Saccharolobus islandicus (strain L.S.2.15 / Lassen #1) (Sulfolobus islandicus).